We begin with the raw amino-acid sequence, 420 residues long: COP9 signalosome complex subunit 5 (420 aa).

The region spanning 73-208 (AALSALACMK…IGAFRTMPET (136 aa)) is the MPN domain. Zn(2+) is bound by residues His154, His156, and Asp167. The JAMM motif signature appears at 154-167 (HSHPGYGCWLSGID).

This sequence belongs to the peptidase M67A family. CSN5 subfamily. Component of the COP9 signalosome (CSN) complex.

Its subcellular location is the cytoplasm. The protein localises to the nucleus. Functionally, catalytic component of the COP9 signalosome (CSN) complex that acts as an regulator of the ubiquitin (Ubl) conjugation pathway by mediating the deneddylation of the cullin subunit of SCF-type E3 ubiquitin-protein ligase complexes. The CSN complex is involved in the regulation of the mating pheromone response. In Eremothecium gossypii (strain ATCC 10895 / CBS 109.51 / FGSC 9923 / NRRL Y-1056) (Yeast), this protein is COP9 signalosome complex subunit 5 (RRI1).